Consider the following 1336-residue polypeptide: Misshapen-like kinase 1 (1336 aa).

A Protein kinase domain is found at 25–289 (FELVEVVGNG…TEQLLKFPFI (265 aa)). ATP-binding positions include 31–39 (VGNGTYGQV) and lysine 54. The active-site Proton acceptor is the aspartate 153. 3 disordered regions span residues 299–347 (RIQL…NVPG), 363–383 (KSNS…QRDP), and 395–890 (QRRI…GGTM). Over residues 317 to 333 (EETEYEYSGSEEEDDSH) the composition is skewed to acidic residues. Phosphoserine occurs at positions 324 and 326. A compositionally biased stretch (low complexity) spans 371–380 (QQQQLQQQQQ). Residues 396–466 (RRIEEQKEER…EEQRQSERLQ (71 aa)) are compositionally biased toward basic and acidic residues. Residues 479–496 (QKQQQQQQQQQQQQQQQQ) are compositionally biased toward low complexity. Omega-N-methylarginine occurs at positions 502 and 510. Basic and acidic residues predominate over residues 519–529 (AWAREVEERAR). A compositionally biased stretch (polar residues) spans 531–544 (NKQQNSPLAKTKPS). The span at 548–562 (PEPPIPQASPSPPGP) shows a compositional bias: pro residues. Over residues 599–609 (RSQSLQDQPTR) the composition is skewed to polar residues. Low complexity predominate over residues 622–632 (PAAVPTPTATP). Phosphoserine is present on serine 643. Polar residues predominate over residues 672–684 (QRTSSIATALNTS). A Phosphoserine modification is found at serine 703. A compositionally biased stretch (pro residues) spans 718-731 (PKPPGPPAQPPGPP). Residues 738 to 750 (DLRRSDPGWERSD) show a composition bias toward basic and acidic residues. A phosphoserine mark is found at serine 756, serine 765, serine 781, serine 782, and serine 786. The segment covering 808–825 (LLKERTLDEAPKPPKKAM) has biased composition (basic and acidic residues). Residues 832–848 (EEVESSEDEEEEGDGEP) are compositionally biased toward acidic residues. Positions 870–1336 (MVVHDVEEVS…TLNRNCIMNW (467 aa)) are mediates interaction with RAP2A. Threonine 895 is subject to Phosphothreonine. Residues 909–946 (GYTNLPDVVQPSHSPTENSQGQSPPTKDGGGDYQSRGL) are disordered. Residues 919–933 (PSHSPTENSQGQSPP) are compositionally biased toward polar residues. A CNH domain is found at 1023-1310 (NSEILCAALW…KFLCERNDKV (288 aa)).

The protein belongs to the protein kinase superfamily. STE Ser/Thr protein kinase family. STE20 subfamily. Interacts with RAP2A and NCK1. Interacts with TANC1. Mg(2+) is required as a cofactor. In terms of processing, autophosphorylated.

The protein resides in the cytoplasm. The protein localises to the postsynaptic density. Its subcellular location is the cell projection. It localises to the axon. It is found in the dendrite. The enzyme catalyses L-seryl-[protein] + ATP = O-phospho-L-seryl-[protein] + ADP + H(+). The catalysed reaction is L-threonyl-[protein] + ATP = O-phospho-L-threonyl-[protein] + ADP + H(+). Functionally, serine/threonine kinase which acts as a negative regulator of Ras-related Rap2-mediated signal transduction to control neuronal structure and AMPA receptor trafficking. Required for normal synaptic density, dendrite complexity, as well as surface AMPA receptor expression in hippocampal neurons. Can activate the JNK and MAPK14/p38 pathways and mediates stimulation of the stress-activated protein kinase MAPK14/p38 MAPK downstream of the Raf/ERK pathway. Phosphorylates TANC1 upon stimulation by RAP2A, MBP and SMAD1. Has an essential function in negative selection of thymocytes, perhaps by coupling NCK1 to activation of JNK1. Activator of the Hippo signaling pathway which plays a pivotal role in organ size control and tumor suppression by restricting proliferation and promoting apoptosis. MAP4Ks act in parallel to and are partially redundant with STK3/MST2 and STK4/MST2 in the phosphorylation and activation of LATS1/2, and establish MAP4Ks as components of the expanded Hippo pathway. The protein is Misshapen-like kinase 1 (Mink1) of Rattus norvegicus (Rat).